The sequence spans 147 residues: UPF0306 protein YhbP (147 aa).

Belongs to the UPF0306 family.

In Escherichia coli O157:H7 (strain EC4115 / EHEC), this protein is UPF0306 protein YhbP.